Consider the following 630-residue polypeptide: Transcription factor MYC1 (630 aa).

Disordered stretches follow at residues 356 to 398 (FGDS…NNEE) and 430 to 463 (VKEA…EAER). Basic residues predominate over residues 440-449 (KPRKRGRKPA). Positions 450-463 (NGREEPLNHVEAER) are enriched in basic and acidic residues. A basic motif; degenerate region spans residues 453–466 (EEPLNHVEAERQRR). The 50-residue stretch at 453–502 (EEPLNHVEAERQRREKLNQRFYALRAVVPNVSKMDKASLLGDAIAYINEL) folds into the bHLH domain. Residues 467 to 502 (EKLNQRFYALRAVVPNVSKMDKASLLGDAIAYINEL) form a helix-loop-helix motif region.

Highly expressed in trichomes and at lower levels in leaves and flowers. Expressed at low levels in roots, stems, leaves, flowers and fruits.

It localises to the nucleus. In terms of biological role, transcriptional activator that binds to the G-box motif (5'-AACGTG-3') found in a number of promoters of jasmonate-induced genes. Transcription activator involved in the transcriptional regulation of terpene biosynthesis in glandular trichomes. Binds to the promoter of the linalool synthase TPS5 and promotes TPS5 gene transactivation. Acts synergistically with EOT1 in the transactivation of TPS5. Involved in type VI glandular trichome development. Involved in the activation of terpene synthases required for volatile mono- and sesquiterpenes synthesis by the glandular cells of type VI trichomes. This chain is Transcription factor MYC1, found in Solanum lycopersicum (Tomato).